Here is a 459-residue protein sequence, read N- to C-terminus: Serine carboxypeptidase-like 27 (459 aa).

A signal peptide spans 1–20; sequence MDYSFLLIILLLTISTSCCA. 3 cysteine pairs are disulfide-bonded: cysteine 91-cysteine 344, cysteine 252-cysteine 264, and cysteine 288-cysteine 312. N-linked (GlcNAc...) asparagine glycosylation is present at asparagine 142. Residue serine 184 is part of the active site. N-linked (GlcNAc...) asparagine glycosylation is found at asparagine 289 and asparagine 333. Residues aspartate 381 and histidine 433 contribute to the active site.

The protein belongs to the peptidase S10 family. In terms of tissue distribution, ubiquitous.

The protein localises to the secreted. Probable carboxypeptidase. The protein is Serine carboxypeptidase-like 27 (SCPL27) of Arabidopsis thaliana (Mouse-ear cress).